The primary structure comprises 485 residues: Dual specificity protein phosphatase CDC14B (485 aa).

The segment at 1-38 is disordered; that stretch reads MKRKSERRSAWATAPPCSRRSSSSSPGVKKSRSSTPQE. Residues 1–54 carry the Nucleolar localization signal motif; sequence MKRKSERRSAWATAPPCSRRSSSSSPGVKKSRSSTPQELHRLEQQDDLYLDITD. Residues 15–28 show a composition bias toward low complexity; sequence PPCSRRSSSSSPGV. The interval 44–198 is a; that stretch reads QQDDLYLDIT…AMQYGFFNFN (155 aa). The linker stretch occupies residues 199–212; that stretch reads SFNLDEYEHYEKAE. The segment at 213–379 is b; it reads NGDFNWIIPE…EGDYFRQKLR (167 aa). A Tyrosine-protein phosphatase domain is found at 215–374; sequence DFNWIIPERF…SSLWLEGDYF (160 aa). The active-site Phosphocysteine intermediate is the C314. Residues 402–424 form a disordered region; the sequence is LNGLENQDNQEPEPYSDDDEVSG. Acidic residues predominate over residues 409–422; it reads DNQEPEPYSDDDEV.

The protein belongs to the protein-tyrosine phosphatase family. Non-receptor class CDC14 subfamily. Interacts with FZR1/CDH1.

Its subcellular location is the nucleus. The protein localises to the nucleolus. The protein resides in the nucleoplasm. It catalyses the reaction O-phospho-L-tyrosyl-[protein] + H2O = L-tyrosyl-[protein] + phosphate. It carries out the reaction O-phospho-L-seryl-[protein] + H2O = L-seryl-[protein] + phosphate. The catalysed reaction is O-phospho-L-threonyl-[protein] + H2O = L-threonyl-[protein] + phosphate. Its function is as follows. Dual-specificity phosphatase involved in DNA damage response. Essential regulator of the G2 DNA damage checkpoint: following DNA damage, translocates to the nucleus and dephosphorylates FZR1/CDH1, a key activator of the anaphase promoting complex/cyclosome (APC/C). Dephosphorylates SIRT2 around early anaphase. Dephosphorylation of FZR1/CDH1 activates the APC/C, leading to the ubiquitination of PLK1, preventing entry into mitosis. Preferentially dephosphorylates proteins modified by proline-directed kinases. The chain is Dual specificity protein phosphatase CDC14B (Cdc14b) from Mus musculus (Mouse).